The sequence spans 60 residues: Toxin TdNa2 (60 aa).

One can recognise an LCN-type CS-alpha/beta domain in the interval 1 to 59; that stretch reads RDAYPADWRGCKPSCPWGSSSWCNEECTSLGGSSGYCAWPACWCYGLPDSVRYYNNKCH. 4 disulfides stabilise this stretch: Cys11/Cys58, Cys15/Cys37, Cys23/Cys42, and Cys27/Cys44.

Belongs to the long (4 C-C) scorpion toxin superfamily. Sodium channel inhibitor family. Beta subfamily. In terms of tissue distribution, expressed by the venom gland.

Its subcellular location is the secreted. In terms of biological role, inhibits the sodium currents (Nav) in an apparent irreversible manner. Produces small depolarization and induces repetitive firing in squid axons. Is specific for arthropods (crickets, triatomides, crabs and squids), but is non-toxic to mice. The sequence is that of Toxin TdNa2 from Tityus discrepans (Venezuelan scorpion).